The sequence spans 314 residues: Olfactory receptor 5P51 (314 aa).

Residues Met-1–Val-28 lie on the Extracellular side of the membrane. Asn-8 carries N-linked (GlcNAc...) asparagine glycosylation. The helical transmembrane segment at Ile-29 to Ile-49 threads the bilayer. The Cytoplasmic segment spans residues Leu-50–Gln-57. The chain crosses the membrane as a helical span at residues Leu-58–Ser-78. The Extracellular segment spans residues Thr-79 to Ile-102. A disulfide bridge connects residues Cys-100 and Cys-192. Residues Gln-103–Tyr-123 traverse the membrane as a helical segment. Topologically, residues Asp-124–Ser-136 are cytoplasmic. The helical transmembrane segment at Thr-137–Leu-157 threads the bilayer. The Extracellular segment spans residues Asn-158–Ile-199. Residues Val-200 to Ser-220 traverse the membrane as a helical segment. Topologically, residues Tyr-221–Ala-240 are cytoplasmic. Residues Phe-241–Ile-261 form a helical membrane-spanning segment. Residues Tyr-262 to Asn-274 lie on the Extracellular side of the membrane. A helical transmembrane segment spans residues Lys-275–Leu-295. At Arg-296 to Ser-314 the chain is on the cytoplasmic side.

It belongs to the G-protein coupled receptor 1 family.

The protein localises to the cell membrane. Its function is as follows. Potential odorant receptor. This Mus musculus (Mouse) protein is Olfactory receptor 5P51.